A 98-amino-acid chain; its full sequence is Large ribosomal subunit protein uL23 (98 aa).

Belongs to the universal ribosomal protein uL23 family. As to quaternary structure, part of the 50S ribosomal subunit. Contacts protein L29, and trigger factor when it is bound to the ribosome.

One of the early assembly proteins it binds 23S rRNA. One of the proteins that surrounds the polypeptide exit tunnel on the outside of the ribosome. Forms the main docking site for trigger factor binding to the ribosome. The sequence is that of Large ribosomal subunit protein uL23 from Hahella chejuensis (strain KCTC 2396).